Consider the following 105-residue polypeptide: Translation initiation factor 1A 2 (105 aa).

Residues 1–22 (MRKRREGSAAPSTQEVTRVRTP) form a disordered region. In terms of domain architecture, S1-like spans 17-91 (TRVRTPRKEN…TKADVIWKYT (75 aa)).

It belongs to the eIF-1A family.

Its function is as follows. Seems to be required for maximal rate of protein biosynthesis. Enhances ribosome dissociation into subunits and stabilizes the binding of the initiator Met-tRNA(I) to 40 S ribosomal subunits. The protein is Translation initiation factor 1A 2 (eIF1A2) of Methanosarcina acetivorans (strain ATCC 35395 / DSM 2834 / JCM 12185 / C2A).